The following is a 114-amino-acid chain: MIDDIAVPLTFTDAAANKVKSLISEEENTDLKLRVYITGGGCSGFQYGFTFDEKVNDGDLTIEKSGVQLVIDPMSLQYLIGGTVDYTEGLEGSRFTVNNPNATSTCGCGSSFSI.

Residues Cys-42, Cys-106, and Cys-108 each coordinate iron-sulfur cluster.

This sequence belongs to the HesB/IscA family. As to quaternary structure, homodimer. Requires iron-sulfur cluster as cofactor.

Its function is as follows. Required for insertion of 4Fe-4S clusters for at least IspG. The chain is Iron-sulfur cluster insertion protein ErpA from Haemophilus influenzae (strain PittEE).